We begin with the raw amino-acid sequence, 551 residues long: Cation/acetate symporter ActP (551 aa).

The next 14 helical transmembrane spans lie at His5–Gly25, Ile34–Ala54, Gly77–Val97, Gly104–Glu124, Leu150–Ala170, Val184–Ala204, Trp207–Val227, Ile263–Leu283, Gly304–Val324, Phe356–Leu376, Val406–Glu426, Ile430–Ile450, Leu469–Leu489, and Tyr498–Ile518.

This sequence belongs to the sodium:solute symporter (SSF) (TC 2.A.21) family.

It is found in the cell inner membrane. Functionally, transports acetate. The polypeptide is Cation/acetate symporter ActP (Yersinia pestis bv. Antiqua (strain Antiqua)).